The following is a 199-amino-acid chain: Recombination protein RecR (199 aa).

A C4-type zinc finger spans residues 58–73 (CSICNNITDVDPCTYC). One can recognise a Toprim domain in the interval 81–176 (QVICVVEEPT…RVTRIATGVP (96 aa)).

This sequence belongs to the RecR family.

Its function is as follows. May play a role in DNA repair. It seems to be involved in an RecBC-independent recombinational process of DNA repair. It may act with RecF and RecO. The chain is Recombination protein RecR from Koribacter versatilis (strain Ellin345).